The following is a 32-amino-acid chain: Alcohol dehydrogenase-related 31 kDa protein (32 aa).

Residue 11-32 (YVADCGGIALETSXVLMTKNIA) coordinates NAD(+).

Belongs to the short-chain dehydrogenases/reductases (SDR) family.

The chain is Alcohol dehydrogenase-related 31 kDa protein (Adhr) from Drosophila yakuba (Fruit fly).